An 822-amino-acid chain; its full sequence is Adhesion G protein-coupled receptor E2 (822 aa).

The first 18 residues, Met-1–Ala-18, serve as a signal peptide directing secretion. Residues Glu-19 to Thr-530 lie on the Extracellular side of the membrane. Residues Asp-22 to Asp-63 form the EGF-like 1 domain. Disulfide bonds link Cys-26/Cys-36, Cys-30/Cys-42, Cys-44/Cys-62, Cys-68/Cys-82, and Cys-76/Cys-91. Residues Asn-33 and Asn-38 are each glycosylated (N-linked (GlcNAc...) asparagine). The 40-residue stretch at Asp-64 to Ala-103 folds into the EGF-like 1; calcium-binding domain. Asn-108 carries N-linked (GlcNAc...) asparagine glycosylation. The EGF-like 2; calcium-binding domain maps to Asp-116–Thr-159. 5 disulfide bridges follow: Cys-120–Cys-133, Cys-127–Cys-142, Cys-144–Cys-158, Cys-164–Cys-177, and Cys-171–Cys-186. An EGF-like 3; calcium-binding domain is found at Asp-160–Ser-198. N-linked (GlcNAc...) asparagine glycosylation is found at Asn-203, Asn-222, Asn-351, Asn-371, Asn-427, Asn-449, and Asn-453. Residues Asp-209–Ile-247 enclose the EGF-like 4; calcium-binding domain. Disulfide bonds link Cys-213–Cys-226 and Cys-220–Cys-235. Residues Asn-351 to Gln-523 enclose the GAIN-B domain. Disulfide bonds link Cys-475/Cys-505 and Cys-493/Cys-507. The interval Cys-475 to Gln-523 is GPS. A helical transmembrane segment spans residues Val-531 to Phe-551. Residues Leu-552–Thr-562 are Cytoplasmic-facing. A helical transmembrane segment spans residues Ser-563–Ile-583. Residues Asp-584 to Glu-589 are Extracellular-facing. Residues Val-590–Met-610 form a helical membrane-spanning segment. The Cytoplasmic segment spans residues Leu-611–Lys-637. A helical membrane pass occupies residues Lys-638–Ser-658. Topologically, residues Arg-659–Gly-676 are extracellular. A helical transmembrane segment spans residues Phe-677–Leu-697. At Val-698–Thr-728 the chain is on the cytoplasmic side. A helical transmembrane segment spans residues Ala-729–Ala-749. The Extracellular portion of the chain corresponds to Arg-750–Ala-753. Residues Tyr-754–Leu-774 form a helical membrane-spanning segment. At Ser-775 to Ser-822 the chain is on the cytoplasmic side. Residues Glu-797–Ser-822 form a disordered region.

It belongs to the G-protein coupled receptor 2 family. Adhesion G-protein coupled receptor (ADGR) subfamily. Forms a heterodimer, consisting of a large extracellular region non-covalently linked to a seven-transmembrane moiety. Interacts with chondroitin sulfate; the interaction with chondroitin sulfate is calcium-dependent. Interacts with CD55. In terms of processing, autoproteolytically cleaved into 2 subunits, an extracellular alpha subunit and a seven-transmembrane beta subunit.

Its subcellular location is the cell membrane. The protein localises to the cell projection. The protein resides in the ruffle membrane. Its function is as follows. Cell surface receptor that binds to the chondroitin sulfate moiety of glycosaminoglycan chains and promotes cell attachment. Promotes granulocyte chemotaxis, degranulation and adhesion. In macrophages, promotes the release of inflammatory cytokines, including IL8 and TNF. Signals probably through G-proteins. The sequence is that of Adhesion G protein-coupled receptor E2 (ADGRE2) from Macaca mulatta (Rhesus macaque).